Reading from the N-terminus, the 1393-residue chain is MEVLMAERANLVFHNKAIDGTAIKRLISRLIDHFGMAYTSHILDQVKTLGFQQATATSISLGIDDLLTIPSKGWLVQDAEQQSLILEKHYHYGNVHAVEKLRQSIEIWYATSEYLRQEMNLNFRMTEPFNPVHIMSFSGARGNTSQVHQLVGMRGLMSDPQGQMIDLPIQSNLREGLSLTEYIISCYGARKGVVDTAVRTSDAGYLTRRLVEVVQHIVVRRTDCGTARGISVSPRNGMMPERIFIQTFIGRVLADNIYMGLRCIAIRNQDIGIGLANRFITFRTQTISIRTPFTCRSTSWICRLCYGRSPTHGDLVELGEAVGIIAGQSIGEPGTQLTLRTFHTGGVFTGGTAEHVRAPSNGKIKFNEDLVHPIRTRHGHPAFLCYIDLYVTIKSQDIIHNVTIPPKSFLLVQNDQYVESEQVIAEIRAGAYTLNFKEKVRKHIYSDSEGEMHWSTDVYHAPEFTYSNVHLLPKTSHLWILSGSSCRSSIVPFSLHKDQDQMNVHSLSVKRRYISSPSVNNDQVKHKFFSSDFSGKKESGIPDYSELNRSICTGHCNLIYSTILYKNSDLLAKRRRNKFIIPFQSIQEREKELMTQSAISIEIPINGIFRRNSVFAYFDDPQYRKKSSGITKYGAIGVHSIVKKEDLIEYRGVKEFKPKYQTKVDRFFFIPEEVYILPESSSLMVRNNSIIGVDTQIALNTRSRVGGLVRVERKKKKMELKIFSGDIHFPGETDKISRHSDILIPPGTVKTNSKESKKVKNWIYIQRITPTKKKYFVLVRPVIIYEIANGINLETLFPQDLLQEKDNLKLRVVNYILYGTGKPIRGISDTSIQLVRTCLVLNWDQDKKSSSIEEARAAFVEISTNGLIRDFLRINLVKFHISYIGRKRNDPSGSEPISNNGSDRTNINPFYPIYSKTRVQQSLKQNQGTISTLLNINKECQSLIILSSSNCFQMDPFNDVKHHNVIKESIKRDPIIPIRNSLGPLGTALQIANFYLFYHLNLITHNQISVTKYSKLYNLKQTFQVLKYYLMDENGRIVNPDPCSNSVLNPFNLNWYFLHHNYCESFFTIISLGQFICENLCMAKNGPHLKSGQVIIVHIDSVVIRSAKPYLATPGATVHGHYGEILYEGNTLVTFIYEKSRSGDITQGLPKVEQVLEVRSIDSISINLEKRVEGWNECITRILGIPWGFLIGTELTIVQSRISLVNKIQKVYRSQGVQIHNRHIEIIVRQITSKVLVSEDGMSNVFSPGELIGLLRAERTGRALEEAICYGAILLGITRASLNTQSFISEASFQETTRVLAKAALRGRIDWLKGLKENVVLGGMIPVGTGFKGLVQGSRQHKNIPLKTKKKNLFEGEFRDRDILFHHRELFDSCISKNLYDTSEQSFIGFNDS.

Zn(2+)-binding residues include Cys-224, Cys-295, Cys-302, and Cys-305.

Belongs to the RNA polymerase beta' chain family. RpoC2 subfamily. In terms of assembly, in plastids the minimal PEP RNA polymerase catalytic core is composed of four subunits: alpha, beta, beta', and beta''. When a (nuclear-encoded) sigma factor is associated with the core the holoenzyme is formed, which can initiate transcription. Requires Zn(2+) as cofactor.

Its subcellular location is the plastid. The protein localises to the chloroplast. It carries out the reaction RNA(n) + a ribonucleoside 5'-triphosphate = RNA(n+1) + diphosphate. Functionally, DNA-dependent RNA polymerase catalyzes the transcription of DNA into RNA using the four ribonucleoside triphosphates as substrates. In Manihot esculenta (Cassava), this protein is DNA-directed RNA polymerase subunit beta''.